Here is a 150-residue protein sequence, read N- to C-terminus: Large ribosomal subunit protein bL9 (150 aa).

This sequence belongs to the bacterial ribosomal protein bL9 family.

Binds to the 23S rRNA. The sequence is that of Large ribosomal subunit protein bL9 from Saccharopolyspora erythraea (strain ATCC 11635 / DSM 40517 / JCM 4748 / NBRC 13426 / NCIMB 8594 / NRRL 2338).